Consider the following 480-residue polypeptide: Bindin (480 aa).

A signal peptide spans 1–20 (MDSQVLPLILLIIVFAASSA). Residues 21 to 247 (HGHFPHRTNQ…GEMRAERQRR (227 aa)) constitute a propeptide that is removed on maturation. Positions 161 to 211 (AEMRHRRSAKDDDVNKRASPRKGSSPAGKKVQIMEQDAGKGDAHNEKEVVK) are disordered. The segment covering 197 to 211 (DAGKGDAHNEKEVVK) has biased composition (basic and acidic residues). The segment at 377–385 (LRHLRHHSN) is fucose-binding domain. The helical transmembrane segment at 431–451 (GAGAVAGAAMAAGMPPYPGGA) threads the bilayer. Residues 452 to 480 (QGGMRVGGQPQNPMGGNAYNPMTGYRQQG) are disordered.

Belongs to the bindin family.

The protein localises to the cytoplasmic vesicle. Its subcellular location is the secretory vesicle. The protein resides in the acrosome membrane. Species-specific sea urchin sperm protein required for adhesion of sperm to the egg surface during fertilization. Bindin coats the acrosomal process after it is externalized by the acrosome reaction. It binds to sulfated, fucose-containing polysaccharides on the vitelline layer receptor proteoglycans which cover the egg plasma membrane. The sequence is that of Bindin from Arbacia punctulata (Punctuate sea urchin).